Consider the following 416-residue polypeptide: Probable tRNA pseudouridine synthase D (416 aa).

The Nucleophile role is filled by aspartate 83. The region spanning 158–379 is the TRUD domain; that stretch reads GFPNYFGYQR…PGGRRELLIR (222 aa).

Belongs to the pseudouridine synthase TruD family.

The catalysed reaction is uridine(13) in tRNA = pseudouridine(13) in tRNA. Could be responsible for synthesis of pseudouridine from uracil-13 in transfer RNAs. The polypeptide is Probable tRNA pseudouridine synthase D (Thermococcus onnurineus (strain NA1)).